We begin with the raw amino-acid sequence, 187 residues long: Ribosome-recycling factor (187 aa).

This sequence belongs to the RRF family.

It localises to the cytoplasm. Responsible for the release of ribosomes from messenger RNA at the termination of protein biosynthesis. May increase the efficiency of translation by recycling ribosomes from one round of translation to another. The chain is Ribosome-recycling factor from Ligilactobacillus salivarius (strain UCC118) (Lactobacillus salivarius).